We begin with the raw amino-acid sequence, 445 residues long: Cyclin-B1-2 (445 aa).

Belongs to the cyclin family. Cyclin AB subfamily. As to quaternary structure, interacts with FZR2/CCS52A1, FZR1/CCS52A2 and FZR3/CCS52B. As to expression, expressed in roots, stems and flowers.

In terms of biological role, may induce mitotic cell division. The sequence is that of Cyclin-B1-2 (CYCB1-2) from Arabidopsis thaliana (Mouse-ear cress).